The chain runs to 217 residues: Somatotropin (217 aa).

The first 27 residues, 1–27 (MMAAGPRTSLLLAFALLCLPWTQMVGA), serve as a signal peptide directing secretion. Residue His-46 participates in Zn(2+) binding. Cysteines 79 and 190 form a disulfide. Phosphoserine is present on Ser-132. Glu-199 is a Zn(2+) binding site. The cysteines at positions 207 and 215 are disulfide-linked.

This sequence belongs to the somatotropin/prolactin family.

It localises to the secreted. In terms of biological role, plays an important role in growth control. Its major role in stimulating body growth is to stimulate the liver and other tissues to secrete IGF1. It stimulates both the differentiation and proliferation of myoblasts. It also stimulates amino acid uptake and protein synthesis in muscle and other tissues. This chain is Somatotropin (GH1), found in Giraffa camelopardalis (Giraffe).